Here is a 168-residue protein sequence, read N- to C-terminus: Small ribosomal subunit protein uS5 (168 aa).

The S5 DRBM domain maps to 14-77; it reads FEERVVSINR…EAAKKNLITV (64 aa).

Belongs to the universal ribosomal protein uS5 family. In terms of assembly, part of the 30S ribosomal subunit. Contacts proteins S4 and S8.

With S4 and S12 plays an important role in translational accuracy. Functionally, located at the back of the 30S subunit body where it stabilizes the conformation of the head with respect to the body. This chain is Small ribosomal subunit protein uS5, found in Lactococcus lactis subsp. lactis (strain IL1403) (Streptococcus lactis).